The chain runs to 137 residues: uncharacterized protein (137 aa).

Helical transmembrane passes span 20-39, 44-61, 86-105, and 109-131; these read YGKIGVATAMAVGAAVGYAV, WFITVIAVLAGVALLSLV, VEIFSIGAALSGAVMLALDL, and AALALEFAVCCVLVLYLIFYGYY.

The protein resides in the cell membrane. This is an uncharacterized protein from Archaeoglobus fulgidus (strain ATCC 49558 / DSM 4304 / JCM 9628 / NBRC 100126 / VC-16).